The sequence spans 194 residues: CASP-like protein 2C2 (194 aa).

Over 1–27 the chain is Cytoplasmic; sequence MAAGQPRPPPPPSSVRTERVLRAACAA. The helical transmembrane segment at 28–48 threads the bilayer; it reads MAAAGALLLGFSAETKTVIFV. The Extracellular segment spans residues 49 to 58; it reads QKKAVPKDVQ. The chain crosses the membrane as a helical span at residues 59–79; it reads ALWVLIVAAAAAAAYHAAQLA. Residues 80–113 lie on the Cytoplasmic side of the membrane; that stretch reads RCLCMDRLAGGGGGCRRLRRAVACATFLLDKGCA. A helical transmembrane segment spans residues 114-134; that stretch reads YMVLATTVAALQACFVGLLGV. The Extracellular portion of the chain corresponds to 135–152; sequence EALQWSKLCNIYTRFCEQ. A helical membrane pass occupies residues 153 to 173; it reads AAAGMVCSLVAAAGMAVLSAF. Residues 174–194 are Cytoplasmic-facing; it reads SARDLFRRRRPCSPCVQVQQV.

Belongs to the Casparian strip membrane proteins (CASP) family. Homodimer and heterodimers.

It is found in the cell membrane. This chain is CASP-like protein 2C2, found in Sorghum bicolor (Sorghum).